A 325-amino-acid polypeptide reads, in one-letter code: Glutarate 2-hydroxylase (325 aa).

3 residues coordinate Fe cation: His160, Asp162, and His292.

The protein belongs to the glutarate hydroxylase family. In terms of assembly, homotetramer. The cofactor is Fe(2+).

It catalyses the reaction glutarate + 2-oxoglutarate + O2 = (S)-2-hydroxyglutarate + succinate + CO2. It participates in amino-acid degradation. In terms of biological role, acts as an alpha-ketoglutarate-dependent dioxygenase catalyzing hydroxylation of glutarate (GA) to L-2-hydroxyglutarate (L2HG). Functions in a L-lysine degradation pathway that proceeds via cadaverine, glutarate and L-2-hydroxyglutarate. In Escherichia fergusonii (strain ATCC 35469 / DSM 13698 / CCUG 18766 / IAM 14443 / JCM 21226 / LMG 7866 / NBRC 102419 / NCTC 12128 / CDC 0568-73), this protein is Glutarate 2-hydroxylase.